A 147-amino-acid polypeptide reads, in one-letter code: Myoglobin (147 aa).

The Globin domain occupies 2–141 (ADFDAVLKCW…IIADLEANYK (140 aa)). H60 contributes to the nitrite binding site. Residue H60 coordinates O2. A heme b-binding site is contributed by H89.

It belongs to the globin family. As to quaternary structure, monomeric.

It is found in the cytoplasm. It localises to the sarcoplasm. The enzyme catalyses Fe(III)-heme b-[protein] + nitric oxide + H2O = Fe(II)-heme b-[protein] + nitrite + 2 H(+). It catalyses the reaction H2O2 + AH2 = A + 2 H2O. Functionally, monomeric heme protein which primary function is to store oxygen and facilitate its diffusion within muscle tissues. Reversibly binds oxygen through a pentacoordinated heme iron and enables its timely and efficient release as needed during periods of heightened demand. Depending on the oxidative conditions of tissues and cells, and in addition to its ability to bind oxygen, it also has a nitrite reductase activity whereby it regulates the production of bioactive nitric oxide. Under stress conditions, like hypoxia and anoxia, it also protects cells against reactive oxygen species thanks to its pseudoperoxidase activity. The protein is Myoglobin (mb) of Thunnus alalunga (Albacore).